The sequence spans 334 residues: Holliday junction branch migration complex subunit RuvB (334 aa).

The segment at 4-184 (ADRLVSAGVI…FGIVQRLEFY (181 aa)) is large ATPase domain (RuvB-L). ATP contacts are provided by residues Ile23, Arg24, Gly65, Lys68, Thr69, Thr70, 131–133 (EDY), Arg174, Tyr184, and Arg221. Thr69 is a binding site for Mg(2+). Positions 185-255 (RVEDLQHIVG…VASRALDMLS (71 aa)) are small ATPAse domain (RuvB-S). Positions 258–334 (SEGFDYMDRK…YKHFGITREG (77 aa)) are head domain (RuvB-H). DNA-binding residues include Arg294, Arg313, and Arg318.

This sequence belongs to the RuvB family. In terms of assembly, homohexamer. Forms an RuvA(8)-RuvB(12)-Holliday junction (HJ) complex. HJ DNA is sandwiched between 2 RuvA tetramers; dsDNA enters through RuvA and exits via RuvB. An RuvB hexamer assembles on each DNA strand where it exits the tetramer. Each RuvB hexamer is contacted by two RuvA subunits (via domain III) on 2 adjacent RuvB subunits; this complex drives branch migration. In the full resolvosome a probable DNA-RuvA(4)-RuvB(12)-RuvC(2) complex forms which resolves the HJ.

Its subcellular location is the cytoplasm. It carries out the reaction ATP + H2O = ADP + phosphate + H(+). Functionally, the RuvA-RuvB-RuvC complex processes Holliday junction (HJ) DNA during genetic recombination and DNA repair, while the RuvA-RuvB complex plays an important role in the rescue of blocked DNA replication forks via replication fork reversal (RFR). RuvA specifically binds to HJ cruciform DNA, conferring on it an open structure. The RuvB hexamer acts as an ATP-dependent pump, pulling dsDNA into and through the RuvAB complex. RuvB forms 2 homohexamers on either side of HJ DNA bound by 1 or 2 RuvA tetramers; 4 subunits per hexamer contact DNA at a time. Coordinated motions by a converter formed by DNA-disengaged RuvB subunits stimulates ATP hydrolysis and nucleotide exchange. Immobilization of the converter enables RuvB to convert the ATP-contained energy into a lever motion, pulling 2 nucleotides of DNA out of the RuvA tetramer per ATP hydrolyzed, thus driving DNA branch migration. The RuvB motors rotate together with the DNA substrate, which together with the progressing nucleotide cycle form the mechanistic basis for DNA recombination by continuous HJ branch migration. Branch migration allows RuvC to scan DNA until it finds its consensus sequence, where it cleaves and resolves cruciform DNA. The chain is Holliday junction branch migration complex subunit RuvB from Erwinia tasmaniensis (strain DSM 17950 / CFBP 7177 / CIP 109463 / NCPPB 4357 / Et1/99).